The following is a 367-amino-acid chain: MLKLSCNVTDHIHNLFSNSRRIFVPVHRQTRPISCFQLKKEPLRAILSADHGNSSVRVADTVSGTSPADRLRFGRLMEDGFSYKEKFIVRSYEVGINKTATIETIANLLQEVACNHVQNVGFSTDGFATTLTMRKLHLIWVTARMHIEIYKYPAWSDVVEIETWCQSEGRIGTRRDWILKDCATGEVIGRATSKWVMMNQDTRRLQRVTDEVRDEYLVFCPPEPRLAFPEENNSSLKKIPKLEDPAQYSMLGLKPRRADLDMNQHVNNVTYIGWVLESIPQEIIDTHELKVITLDYRRECQQDDIVDSLTTSETPNEVVSKLTGTNGSTTSSKREHNESHFLHILRLSENGQEINRGRTQWRKKSSR.

Residues 1-48 constitute a chloroplast transit peptide; that stretch reads MLKLSCNVTDHIHNLFSNSRRIFVPVHRQTRPISCFQLKKEPLRAILS. Catalysis depends on residues Asn263, His265, and Cys300.

It belongs to the acyl-ACP thioesterase family.

Its subcellular location is the plastid. It is found in the chloroplast. The catalysed reaction is (9Z)-octadecenoyl-[ACP] + H2O = (9Z)-octadecenoate + holo-[ACP] + H(+). Functionally, plays an essential role in chain termination during de novo fatty acid synthesis. Possesses high thioesterase activity for oleoyl-ACP versus other acyl-ACPs. This chain is Oleoyl-acyl carrier protein thioesterase 2, chloroplastic (FATA2), found in Arabidopsis thaliana (Mouse-ear cress).